A 780-amino-acid polypeptide reads, in one-letter code: ATP-dependent 6-phosphofructokinase, liver type (780 aa).

Position 2 is an N-acetylalanine (A2). Positions 2-390 are N-terminal catalytic PFK domain 1; sequence ATVDLEKLRM…NWKIYKLLAH (389 aa). ATP is bound by residues G25, 88–89, and 118–121; these read RC and GDGS. D119 provides a ligand contact to Mg(2+). Residues 164 to 166, R201, 208 to 210, E264, R292, and 298 to 301 each bind substrate; these read SID, MGR, and HVQR. The active-site Proton acceptor is the D166. A Phosphoserine modification is found at S377. The tract at residues 391 to 400 is interdomain linker; the sequence is QKVSKEKSNF. The segment at 401 to 780 is C-terminal regulatory PFK domain 2; sequence SLAILNVGAP…RRTLSIDKGF (380 aa). Residues R470, 527–531, R565, 572–574, and E628 contribute to the beta-D-fructose 2,6-bisphosphate site; these read TISNN and MGG. O-linked (GlcNAc) serine glycosylation is present at S529. At Y640 the chain carries Phosphotyrosine. Residues R654, 660–663, and R734 contribute to the beta-D-fructose 2,6-bisphosphate site; that span reads HLQQ. A Phosphoserine modification is found at S775.

The protein belongs to the phosphofructokinase type A (PFKA) family. ATP-dependent PFK group I subfamily. Eukaryotic two domain clade 'E' sub-subfamily. In terms of assembly, homo- and heterotetramers. Phosphofructokinase (PFK) enzyme functions as a tetramer composed of different combinations of 3 types of subunits, called PFKM (M), PFKL (L) and PFKP (P). The composition of the PFK tetramer differs according to the tissue type it is present in. The kinetic and regulatory properties of the tetrameric enzyme are dependent on the subunit composition, hence can vary across tissues. Mg(2+) is required as a cofactor. Post-translationally, glcNAcylation at Ser-529 by OGT decreases enzyme activity, leading to redirect glucose flux through the oxidative pentose phosphate pathway. Glycosylation is stimulated by both hypoxia and glucose deprivation.

It is found in the cytoplasm. The enzyme catalyses beta-D-fructose 6-phosphate + ATP = beta-D-fructose 1,6-bisphosphate + ADP + H(+). It participates in carbohydrate degradation; glycolysis; D-glyceraldehyde 3-phosphate and glycerone phosphate from D-glucose: step 3/4. Allosterically activated by ADP, AMP, or fructose 2,6-bisphosphate, and allosterically inhibited by ATP or citrate. GlcNAcylation by OGT overcomes allosteric regulation. Functionally, catalyzes the phosphorylation of D-fructose 6-phosphate to fructose 1,6-bisphosphate by ATP, the first committing step of glycolysis. Negatively regulates the phagocyte oxidative burst in response to bacterial infection by controlling cellular NADPH biosynthesis and NADPH oxidase-derived reactive oxygen species. Upon macrophage activation, drives the metabolic switch toward glycolysis, thus preventing glucose turnover that produces NADPH via pentose phosphate pathway. This chain is ATP-dependent 6-phosphofructokinase, liver type, found in Mus musculus (Mouse).